Reading from the N-terminus, the 110-residue chain is Nucleoid-associated protein bbp_426 (110 aa).

Belongs to the YbaB/EbfC family. In terms of assembly, homodimer.

It localises to the cytoplasm. It is found in the nucleoid. Binds to DNA and alters its conformation. May be involved in regulation of gene expression, nucleoid organization and DNA protection. The chain is Nucleoid-associated protein bbp_426 from Buchnera aphidicola subsp. Baizongia pistaciae (strain Bp).